Reading from the N-terminus, the 133-residue chain is Large ribosomal subunit protein eL32y (133 aa).

It belongs to the eukaryotic ribosomal protein eL32 family.

This Arabidopsis thaliana (Mouse-ear cress) protein is Large ribosomal subunit protein eL32y (RPL32B).